A 413-amino-acid polypeptide reads, in one-letter code: Sporulation-specific protein 74 (413 aa).

The tract at residues 1 to 87 is disordered; that stretch reads MGAGTLLNGL…SEHTDDFNDG (87 aa). Over residues 69–83 the composition is skewed to basic and acidic residues; that stretch reads HENKDIHERSEHTDD.

Interacts with itself. Interacts with MPC54, NUD1 and SPO21/MPC70.

The protein localises to the cytoplasm. It localises to the cytoskeleton. The protein resides in the microtubule organizing center. It is found in the spindle pole body. In terms of biological role, involved in the pathway that organizes the shaping and sizing of the prospore membrane (PSM) during sporulation. Probable component of a core structural unit of the scaffold that initiates synthesis of the prospore membrane. This is Sporulation-specific protein 74 (SPO74) from Saccharomyces cerevisiae (strain ATCC 204508 / S288c) (Baker's yeast).